Here is a 579-residue protein sequence, read N- to C-terminus: MFS-type transporter ppz2 (579 aa).

Positions 1–23 are disordered; sequence MQTATALEDSANAPSPAASSQGQ. Low complexity predominate over residues 10–20; it reads SANAPSPAASS. Asparagine 38 is a glycosylation site (N-linked (GlcNAc...) asparagine). 14 consecutive transmembrane segments (helical) span residues 48 to 68, 83 to 103, 121 to 141, 145 to 165, 171 to 191, 203 to 223, 236 to 256, 269 to 289, 298 to 318, 336 to 356, 374 to 394, 403 to 423, 438 to 460, and 516 to 536; these read ALIM…NTII, AAYT…TMVW, LCFF…MLIA, IQGI…GDLF, GLYY…GPVV, WCFY…ILLL, IAAI…MILL, SATV…CFSW, LLPV…ACFI, AVLG…AVSI, LTPI…FIDL, IIVF…APMV, TSAY…QTVF, and SMWI…PFLG.

The protein belongs to the major facilitator superfamily. TCR/Tet family.

Its subcellular location is the membrane. Functionally, MFS-type transporter; part of the gene cluster that mediates the biosynthesis of pyrrolopyrazines, secondary metabolites showing insecticidal activity. Probably involved in the secretion of peramine and other pyrrolopyrazines. The protein is MFS-type transporter ppz2 of Metarhizium majus (strain ARSEF 297).